Reading from the N-terminus, the 347-residue chain is MLKFIQNNREATALLAIVCLFVFPGALDSQYLSVQTLTMVFSSAQILMLLAIGATMVMLTRNIDVSVGSTTGMCAVLLGVMLNAGYSLPVACLATLILGIVAGFFNGVLVAWLKIPAIVATLGTLGLYRGIMLLWTGGKWIEGLPAGLKQLSAPVFLGISAIGWFTLVLALLMAWLLAKTAFGRNFYATGDNLQGARQLGVRTEMVRIMAFSLNGGMAALAGIVFASQIGFIPNQTGTGLEMKAIAACVLGGISLLGGSGTVIGAILGAYFLTQIDSVLVLLRIPAWWNDFIAGLVLLGVLVFDGRLRCALQRNLRRQKYARFISPPTPLQTEAKTHAQQNKNKEVA.

A run of 9 helical transmembrane segments spans residues 14 to 34 (LLAI…YLSV), 39 to 59 (MVFS…MVML), 72 to 92 (GMCA…PVAC), 93 to 113 (LATL…VAWL), 115 to 135 (IPAI…MLLW), 155 to 175 (VFLG…LMAW), 213 to 233 (LNGG…GFIP), 249 to 269 (VLGG…ILGA), and 284 to 304 (IPAW…LVFD).

Belongs to the binding-protein-dependent transport system permease family. AraH/RbsC subfamily. In terms of assembly, the complex is composed of two ATP-binding proteins (LsrA), two transmembrane proteins (LsrC and LsrD) and a solute-binding protein (LsrB).

The protein resides in the cell inner membrane. Functionally, part of the ABC transporter complex LsrABCD involved in autoinducer 2 (AI-2) import. Probably responsible for the translocation of the substrate across the membrane. The chain is Autoinducer 2 import system permease protein LsrC (lsrC) from Salmonella paratyphi A (strain ATCC 9150 / SARB42).